Reading from the N-terminus, the 431-residue chain is GTPase Obg (431 aa).

Residues 1–158 (MFVDQVKVDV…LTIRMELKVL (158 aa)) form the Obg domain. The 177-residue stretch at 159–335 (ADVGLVGFPS…LLAKTADLLD (177 aa)) folds into the OBG-type G domain. GTP is bound by residues 165-172 (GFPSVGKS), 190-194 (FTTLV), 212-215 (DLPG), 282-285 (TKMD), and 316-318 (SSI). 2 residues coordinate Mg(2+): Ser-172 and Thr-192. The 79-residue stretch at 353-431 (YTTEADADFS…ILDYSFQFMD (79 aa)) folds into the OCT domain.

Belongs to the TRAFAC class OBG-HflX-like GTPase superfamily. OBG GTPase family. Monomer. Mg(2+) is required as a cofactor.

The protein resides in the cytoplasm. Functionally, an essential GTPase which binds GTP, GDP and possibly (p)ppGpp with moderate affinity, with high nucleotide exchange rates and a fairly low GTP hydrolysis rate. Plays a role in control of the cell cycle, stress response, ribosome biogenesis and in those bacteria that undergo differentiation, in morphogenesis control. The protein is GTPase Obg of Lactiplantibacillus plantarum (strain ATCC BAA-793 / NCIMB 8826 / WCFS1) (Lactobacillus plantarum).